The following is an 88-amino-acid chain: Small ribosomal subunit protein uS15c (88 aa).

It belongs to the universal ribosomal protein uS15 family. As to quaternary structure, part of the 30S ribosomal subunit.

The protein localises to the plastid. It is found in the chloroplast. This chain is Small ribosomal subunit protein uS15c (rps15), found in Arabidopsis thaliana (Mouse-ear cress).